The primary structure comprises 151 residues: FAD synthase (151 aa).

Residues 21 to 22 (TF), 26 to 29 (HPGH), and Asp-104 each bind ATP.

This sequence belongs to the archaeal FAD synthase family. As to quaternary structure, homodimer. A divalent metal cation is required as a cofactor.

The catalysed reaction is FMN + ATP + H(+) = FAD + diphosphate. The protein operates within cofactor biosynthesis; FAD biosynthesis; FAD from FMN: step 1/1. Its function is as follows. Catalyzes the transfer of the AMP portion of ATP to flavin mononucleotide (FMN) to produce flavin adenine dinucleotide (FAD) coenzyme. This Methanosarcina acetivorans (strain ATCC 35395 / DSM 2834 / JCM 12185 / C2A) protein is FAD synthase.